The following is a 560-amino-acid chain: Serine palmitoyltransferase 2 (560 aa).

The helical transmembrane segment at 65 to 85 threads the bilayer; that stretch reads PMLVAVLTYVGYGVLTLFGYL. An N6-(pyridoxal phosphate)lysine modification is found at K377.

The protein belongs to the class-II pyridoxal-phosphate-dependent aminotransferase family. Component of the serine palmitoyltransferase (SPT) complex, which is composed of SPTLC1, SPTLC2 or SPTLC3 and SPTSSA or SPTSSB. The heterodimer consisting of SPTLC1 and SPTLC2/SPTLC3 forms the catalytic core of the enzyme, while SPTSSA or SPTSSB subunits determine substrate specificity. SPT also interacts with ORMDL proteins, especially ORMDL3, which negatively regulate SPT activity in the presence of ceramides. Forms dimers of heterodimers with SPTLC1. The cofactor is pyridoxal 5'-phosphate. In terms of tissue distribution, expressed in a variety of tissues. Expressed in brains cortices (at protein level). Expressed in brown and white adipose tissues. Expressed in liver.

It localises to the endoplasmic reticulum membrane. The enzyme catalyses L-serine + hexadecanoyl-CoA + H(+) = 3-oxosphinganine + CO2 + CoA. It carries out the reaction octadecanoyl-CoA + L-serine + H(+) = 3-oxoeicosasphinganine + CO2 + CoA. It participates in lipid metabolism; sphingolipid metabolism. SPT complex catalytic activity is negatively regulated by ORMDL proteins, including ORMDL3, in the presence of ceramides. This mechanism allows to maintain ceramide levels at sufficient concentrations for the production of complex sphingolipids, but which prevents the accumulation of ceramides to levels that trigger apoptosis. In terms of biological role, component of the serine palmitoyltransferase multisubunit enzyme (SPT) that catalyzes the initial and rate-limiting step in sphingolipid biosynthesis by condensing L-serine and activated acyl-CoA (most commonly palmitoyl-CoA) to form long-chain bases. The SPT complex is composed of SPTLC1, SPTLC2 or SPTLC3 and SPTSSA or SPTSSB. Within this complex, the heterodimer consisting of SPTLC1 and SPTLC2/SPTLC3 forms the catalytic core. The composition of the serine palmitoyltransferase (SPT) complex determines the substrate preference. The SPTLC1-SPTLC2-SPTSSA complex shows a strong preference for C16-CoA substrate, while the SPTLC1-SPTLC3-SPTSSA isozyme uses both C14-CoA and C16-CoA as substrates, with a slight preference for C14-CoA. The SPTLC1-SPTLC2-SPTSSB complex shows a strong preference for C18-CoA substrate, while the SPTLC1-SPTLC3-SPTSSB isozyme displays an ability to use a broader range of acyl-CoAs, without apparent preference. Crucial for adipogenesis. The polypeptide is Serine palmitoyltransferase 2 (Mus musculus (Mouse)).